Here is a 326-residue protein sequence, read N- to C-terminus: Heat-inducible transcription repressor HrcA (326 aa).

This sequence belongs to the HrcA family.

Functionally, negative regulator of class I heat shock genes (grpE-dnaK-dnaJ and groELS operons). Prevents heat-shock induction of these operons. The protein is Heat-inducible transcription repressor HrcA of Staphylococcus saprophyticus subsp. saprophyticus (strain ATCC 15305 / DSM 20229 / NCIMB 8711 / NCTC 7292 / S-41).